A 318-amino-acid chain; its full sequence is Transaldolase (318 aa).

The active-site Schiff-base intermediate with substrate is the K132.

The protein belongs to the transaldolase family. Type 1 subfamily. In terms of assembly, homodimer.

Its subcellular location is the cytoplasm. It catalyses the reaction D-sedoheptulose 7-phosphate + D-glyceraldehyde 3-phosphate = D-erythrose 4-phosphate + beta-D-fructose 6-phosphate. Its pathway is carbohydrate degradation; pentose phosphate pathway; D-glyceraldehyde 3-phosphate and beta-D-fructose 6-phosphate from D-ribose 5-phosphate and D-xylulose 5-phosphate (non-oxidative stage): step 2/3. Functionally, transaldolase is important for the balance of metabolites in the pentose-phosphate pathway. The sequence is that of Transaldolase from Hamiltonella defensa subsp. Acyrthosiphon pisum (strain 5AT).